Consider the following 506-residue polypeptide: Spindle pole body protein CSA6 (506 aa).

Disordered regions lie at residues 18 to 121 (SPIK…PNEN), 252 to 276 (EKHNNPQDSPPKVKIATPDPEVETQ), 329 to 429 (PSSP…YSIR), and 447 to 470 (KNDQKDTNSPEESNTDGKEEEEKV). The span at 38–48 (IDLRDYMDRQK) shows a compositional bias: basic and acidic residues. Over residues 50-59 (SRNYSDSEYT) the composition is skewed to polar residues. A compositionally biased stretch (basic and acidic residues) spans 63–72 (IKREKPETKQ). Polar residues predominate over residues 94–119 (PTKNYSQHVMQERSAPNSPQKKSLPN). 2 stretches are compositionally biased toward polar residues: residues 330-353 (SSPNHQTQPVFQSTPQSKVESVNL) and 361-389 (QPSHVSSNSQQNLSDKSRTSIPSRDNPSP). 2 stretches are compositionally biased toward basic and acidic residues: residues 412-422 (EWTREREERDG) and 461-470 (TDGKEEEEKV).

It is found in the cytoplasm. The protein localises to the cytoskeleton. Its subcellular location is the microtubule organizing center. The protein resides in the spindle pole body. Functionally, plays a role in mitotic spindle pole body organization, possibly at the point of spindle pole body separation. Required for mitotic exit. This Candida tropicalis (strain ATCC MYA-3404 / T1) (Yeast) protein is Spindle pole body protein CSA6.